An 81-amino-acid polypeptide reads, in one-letter code: Short neurotoxin 1 (81 aa).

A signal peptide spans 1-21 (MKTLLLTLVVVTIVCLDLGYT). Cystine bridges form between Cys-24-Cys-43, Cys-38-Cys-60, Cys-62-Cys-73, and Cys-74-Cys-79.

Belongs to the three-finger toxin family. Short-chain subfamily. Type I alpha-neurotoxin sub-subfamily. In terms of tissue distribution, expressed by the venom gland.

The protein localises to the secreted. Binds to muscle nicotinic acetylcholine receptor (nAChR) and inhibit acetylcholine from binding to the receptor, thereby impairing neuromuscular transmission. In Tropidechis carinatus (Australian rough-scaled snake), this protein is Short neurotoxin 1.